The chain runs to 215 residues: MRVILLGAPGAGKGTQAKFITEKFGIPQISTGDMLRAAVKAGTELGLIAKSVMDSGGLVSDDLIINLVKERISQEDCKNGFLFDGFPRTIPQAEALVKAGVELDAVVEIAVEDEEIVQRIAGRRVHEASGRVYHTVYNPPKVEGKDDVTGDDLVQRKDDTEETVRHRLSVYHSQTKPLVDFYQKLSAAQGKPKYSHIPGVGSVEAITAKVLQALS.

10–15 contributes to the ATP binding site; that stretch reads GAGKGT. An NMP region spans residues 30-59; sequence STGDMLRAAVKAGTELGLIAKSVMDSGGLV. Residues T31, R36, 57-59, 85-88, and Q92 contribute to the AMP site; these read GLV and GFPR. The tract at residues 122–159 is LID; that stretch reads GRRVHEASGRVYHTVYNPPKVEGKDDVTGDDLVQRKDD. Residues R123 and 132–133 contribute to the ATP site; that span reads VY. Positions 156 and 167 each coordinate AMP. G201 contributes to the ATP binding site.

The protein belongs to the adenylate kinase family. As to quaternary structure, monomer.

It localises to the cytoplasm. The enzyme catalyses AMP + ATP = 2 ADP. It participates in purine metabolism; AMP biosynthesis via salvage pathway; AMP from ADP: step 1/1. Its function is as follows. Catalyzes the reversible transfer of the terminal phosphate group between ATP and AMP. Plays an important role in cellular energy homeostasis and in adenine nucleotide metabolism. In Pseudomonas fluorescens (strain SBW25), this protein is Adenylate kinase.